A 556-amino-acid chain; its full sequence is 2-succinyl-5-enolpyruvyl-6-hydroxy-3-cyclohexene-1-carboxylate synthase (556 aa).

The protein belongs to the TPP enzyme family. MenD subfamily. As to quaternary structure, homodimer. It depends on Mg(2+) as a cofactor. Mn(2+) serves as cofactor. Requires thiamine diphosphate as cofactor.

It catalyses the reaction isochorismate + 2-oxoglutarate + H(+) = 5-enolpyruvoyl-6-hydroxy-2-succinyl-cyclohex-3-ene-1-carboxylate + CO2. It participates in quinol/quinone metabolism; 1,4-dihydroxy-2-naphthoate biosynthesis; 1,4-dihydroxy-2-naphthoate from chorismate: step 2/7. It functions in the pathway quinol/quinone metabolism; menaquinone biosynthesis. In terms of biological role, catalyzes the thiamine diphosphate-dependent decarboxylation of 2-oxoglutarate and the subsequent addition of the resulting succinic semialdehyde-thiamine pyrophosphate anion to isochorismate to yield 2-succinyl-5-enolpyruvyl-6-hydroxy-3-cyclohexene-1-carboxylate (SEPHCHC). The polypeptide is 2-succinyl-5-enolpyruvyl-6-hydroxy-3-cyclohexene-1-carboxylate synthase (Staphylococcus epidermidis (strain ATCC 12228 / FDA PCI 1200)).